The following is a 377-amino-acid chain: Modification methylase CviBIII (377 aa).

It belongs to the N(4)/N(6)-methyltransferase family.

The enzyme catalyses a 2'-deoxyadenosine in DNA + S-adenosyl-L-methionine = an N(6)-methyl-2'-deoxyadenosine in DNA + S-adenosyl-L-homocysteine + H(+). In terms of biological role, a gamma subtype methylase that recognizes the double-stranded sequence 5'-TCGA-3' and methylates A-4 on both strands. This chain is Modification methylase CviBIII (CVIBIIIM), found in Paramecium bursaria Chlorella virus NC1A (PBCV-NC1A).